The sequence spans 349 residues: Phosphate carrier protein, mitochondrial (349 aa).

Solcar repeat units follow at residues Lys47 to Gln131, Tyr144 to Leu229, and Glu246 to Trp324. A run of 6 helical transmembrane segments spans residues Tyr48–Val68, Ala108–Phe128, Phe147–Leu167, Pro207–Val227, Leu248–Pro268, and Ile304–Trp324.

Belongs to the mitochondrial carrier (TC 2.A.29) family.

It is found in the mitochondrion inner membrane. Functionally, transport of phosphate groups from the cytosol to the mitochondrial matrix. This chain is Phosphate carrier protein, mitochondrial, found in Choristoneura fumiferana (Spruce budworm moth).